The sequence spans 414 residues: Glucose-6-phosphate isomerase (414 aa).

The active-site Proton donor is Glu-266. Active-site residues include His-292 and Lys-405.

Belongs to the GPI family.

It is found in the cytoplasm. It catalyses the reaction alpha-D-glucose 6-phosphate = beta-D-fructose 6-phosphate. It functions in the pathway carbohydrate biosynthesis; gluconeogenesis. The protein operates within carbohydrate degradation; glycolysis; D-glyceraldehyde 3-phosphate and glycerone phosphate from D-glucose: step 2/4. Catalyzes the reversible isomerization of glucose-6-phosphate to fructose-6-phosphate. The protein is Glucose-6-phosphate isomerase of Thermus thermophilus (strain ATCC BAA-163 / DSM 7039 / HB27).